The following is a 791-amino-acid chain: Cullin-2 (791 aa).

The 63-residue stretch at 722-784 folds into the Cullin neddylation domain; the sequence is DRKYYMECAI…KMYIQRTDQN (63 aa). A Glycyl lysine isopeptide (Lys-Gly) (interchain with G-Cter in NEDD8) cross-link involves residue lysine 736.

Belongs to the cullin family. In terms of assembly, component of multiple CBC (Cul2-ElonginB-ElonginC) E3 ubiquitin-protein ligase complexes formed of cul-2, elb-1, elc-1, rbx-1 and a variable substrate recognition component. Component of the CBC(fem-1) E3 ubiquitin-protein ligase complex with fem-1, fem-2 and fem-3. The CBC(fem-1) complex interacts with tra-1 and promotes tra-1 degradation. Probable component of the CBC(lrr-1) E3 ubiquitin-protein ligase complex incuding cul-2, elb-1, elc-1, rbx-1 and lrr-1. The CBC(lrr-1) complex interacts with the DNA replisome complex at the end of S phase; the interaction promotes the release of components of the CMG helicase complex (a component of the replisome) from chromatin. Probable component of an CBC(zif-1) E3 ubiquitin-protein ligase including cul-2, elc-1, rbx-1 and zif-1. Part of an E3 ubiquitin-protein ligase complex including cul-2, elc-1 and zyg-11. Interacts with Skp1-related protein skr-10. Post-translationally, neddylated; which enhances the ubiquitination activity of CBC (Cul2-ElonginB-ElonginC) E3 ubiquitin-protein ligase complexes. In terms of tissue distribution, in adults, highly expressed in meiotic cells and oocytes. In larvae, expressed in many proliferating cell types: P cells during the L1 stage; seam cells when they divide at every molt; vulval and somatic gonad cells in late L3 and L4 stages; and intestinal cells throughout larval development.

It is found in the cytoplasm. The protein resides in the nucleus. It participates in protein modification; protein ubiquitination. In terms of biological role, core component of multiple cullin-RING-based CBC (Cul2-ElonginB-ElonginC) E3 ubiquitin-protein ligase complexes which mediate the ubiquitination and subsequent proteasomal degradation of target proteins. As a scaffold protein may contribute to catalysis through positioning of the substrate and the ubiquitin-conjugating enzyme. The functional specificity of the CBC complex depends on the variable substrate recognition component. May function in ubiquitin-mediated degradation of CKIs to target cki-1 for degradation. CBC(zif-1) may ensure germline precursor cell asymmetry by targeting germline proteins for destruction if expressed in non-germline cells. As part of the CBC(fem-1) complex directs ubiquitination of tra-1. As part of the CBC(lrr-1) complex, required for the ubiquitination and dissasembly of the CMG helicase complex from chromatin at the end of DNA replication. Positive cell-cycle regulator that is required at two distinct points in the cell cycle; the G1-to-S-phase transition and mitosis. Also required for proper cytoskeletal movement and mitotic chromosome condensation. In Caenorhabditis elegans, this protein is Cullin-2.